The sequence spans 238 residues: Ribonuclease PH (238 aa).

Phosphate contacts are provided by residues Arg-86 and 124–126 (GTR).

The protein belongs to the RNase PH family. Homohexameric ring arranged as a trimer of dimers.

The catalysed reaction is tRNA(n+1) + phosphate = tRNA(n) + a ribonucleoside 5'-diphosphate. Its function is as follows. Phosphorolytic 3'-5' exoribonuclease that plays an important role in tRNA 3'-end maturation. Removes nucleotide residues following the 3'-CCA terminus of tRNAs; can also add nucleotides to the ends of RNA molecules by using nucleoside diphosphates as substrates, but this may not be physiologically important. Probably plays a role in initiation of 16S rRNA degradation (leading to ribosome degradation) during starvation. The chain is Ribonuclease PH from Actinobacillus pleuropneumoniae serotype 5b (strain L20).